The chain runs to 1049 residues: Probable disease resistance protein RF9 (1049 aa).

Residues 25 to 41 (QGVEDQVTELKRDLNLL) adopt a coiled-coil conformation. The disordered stretch occupies residues 139-158 (GYKQPQGDKQREMRPRFSKD). Residues 144-158 (QGDKQREMRPRFSKD) are compositionally biased toward basic and acidic residues. In terms of domain architecture, NB-ARC spans 147 to 460 (KQREMRPRFS…AEGIFQPRHY (314 aa)). Position 190 to 197 (190 to 197 (GMGGLGKT)) interacts with ATP. LRR repeat units follow at residues 584 to 608 (LELL…SIGQ), 609 to 634 (LIHL…NLKL), 657 to 682 (MQQL…NLVK), 683 to 707 (LETL…RLRT), 776 to 799 (PSHL…ILEK), 800 to 827 (LHQL…GFPQ), 849 to 873 (MPVL…HLPS), 896 to 923 (LVHL…GFPQ), 945 to 968 (MPQL…GFPQ), and 990 to 1015 (MPLL…RFIY).

Belongs to the disease resistance NB-LRR family.

In terms of biological role, potential disease resistance protein. This is Probable disease resistance protein RF9 (RF9) from Arabidopsis thaliana (Mouse-ear cress).